Consider the following 500-residue polypeptide: E3 ubiquitin-protein ligase TRIM69 (500 aa).

Positions 1-22 (MEVSSRPPSNFDPGNYVEMSDP) are disordered. A necessary for nuclear localization region spans residues 1–153 (MEVSSRPPSN…SMGQSKDFLQ (153 aa)). Residues 42–83 (CPLCNDWFRDPLMLTCGHNFCQDCIQSFWKVHSKETFCPDCK) form an RING-type zinc finger. Residues 217–256 (NKEKDILNDLRDEGKLLNEEMEVNLNQIQEQCLVAKDMLA) adopt a coiled-coil conformation. Residues 306 to 500 (PIQYIIWKEM…KEPLHIVHPQ (195 aa)) enclose the B30.2/SPRY domain. At Ser342 the chain carries Phosphoserine.

This sequence belongs to the TRIM/RBCC family. As to quaternary structure, homo-multimer; required for antiviral activity. Interacts with PML. In terms of processing, phosphorylated. Phosphorylation is necessary for nuclear localization. Expressed in spermatid.

The protein resides in the cytoplasm. It is found in the nucleus. The protein localises to the nucleus speckle. Its subcellular location is the cytoskeleton. It localises to the microtubule organizing center. The protein resides in the centrosome. It carries out the reaction S-ubiquitinyl-[E2 ubiquitin-conjugating enzyme]-L-cysteine + [acceptor protein]-L-lysine = [E2 ubiquitin-conjugating enzyme]-L-cysteine + N(6)-ubiquitinyl-[acceptor protein]-L-lysine.. It functions in the pathway protein modification; protein ubiquitination. Functionally, E3 ubiquitin ligase that plays an important role in antiviral immunity by restricting different viral infections including dengue virus or vesicular stomatitis indiana virus. Ubiquitinates viral proteins such as dengue virus NS3 thereby limiting infection. In addition, acts as a key mediator of type I interferon induced microtubule stabilization by directly associating to microtubules independently of its E3 ligase activity. Also plays a role in cataract formation together with TP53. Mechanistically, inhibits UVB-induced cell apoptosis and reactive oxygen species (ROS) production by inducing TP53 ubiquitination. Regulates centrosome dynamics and mitotic progression by ubiquitinating STK3/MST2; leading to its redistribution to the perinuclear cytoskeleton and subsequent phosphorylation by PLK1. The polypeptide is E3 ubiquitin-protein ligase TRIM69 (Trim69) (Mus musculus (Mouse)).